We begin with the raw amino-acid sequence, 246 residues long: Pyruvate formate-lyase 1-activating enzyme (246 aa).

The region spanning V16–Q239 is the Radical SAM core domain. Residues C30, C34, and C37 each contribute to the [4Fe-4S] cluster site. Residues Y36 to H38, G79, D130 to K132, and H203 contribute to the S-adenosyl-L-methionine site.

This sequence belongs to the organic radical-activating enzymes family. It depends on [4Fe-4S] cluster as a cofactor.

The protein localises to the cytoplasm. The enzyme catalyses glycyl-[formate C-acetyltransferase] + reduced [flavodoxin] + S-adenosyl-L-methionine = glycin-2-yl radical-[formate C-acetyltransferase] + semiquinone [flavodoxin] + 5'-deoxyadenosine + L-methionine + H(+). In terms of biological role, activation of pyruvate formate-lyase 1 under anaerobic conditions by generation of an organic free radical, using S-adenosylmethionine and reduced flavodoxin as cosubstrates to produce 5'-deoxy-adenosine. The chain is Pyruvate formate-lyase 1-activating enzyme (pflA) from Escherichia coli O157:H7.